The chain runs to 103 residues: Large ribosomal subunit protein bL21 (103 aa).

It belongs to the bacterial ribosomal protein bL21 family. As to quaternary structure, part of the 50S ribosomal subunit. Contacts protein L20.

In terms of biological role, this protein binds to 23S rRNA in the presence of protein L20. The sequence is that of Large ribosomal subunit protein bL21 from Lactobacillus acidophilus (strain ATCC 700396 / NCK56 / N2 / NCFM).